The following is a 43-amino-acid chain: Protein PsbN (43 aa).

Residues 5 to 27 (NLVTISISCLLVSLTGYAIYTSF) form a helical membrane-spanning segment.

The protein belongs to the PsbN family.

It localises to the plastid. The protein localises to the chloroplast thylakoid membrane. Functionally, may play a role in photosystem I and II biogenesis. The protein is Protein PsbN of Gnetum gnemon (Spanish joint-fir).